The sequence spans 237 residues: Pyridoxine 5'-phosphate synthase (237 aa).

3-amino-2-oxopropyl phosphate is bound by residues Asn7 and Arg18. His43 acts as the Proton acceptor in catalysis. Residues Arg45 and His50 each contribute to the 1-deoxy-D-xylulose 5-phosphate site. Glu70 functions as the Proton acceptor in the catalytic mechanism. Residue Thr100 participates in 1-deoxy-D-xylulose 5-phosphate binding. His190 (proton donor) is an active-site residue. 3-amino-2-oxopropyl phosphate-binding positions include Asp191 and 213-214 (GH).

This sequence belongs to the PNP synthase family. As to quaternary structure, homooctamer; tetramer of dimers.

It localises to the cytoplasm. It carries out the reaction 3-amino-2-oxopropyl phosphate + 1-deoxy-D-xylulose 5-phosphate = pyridoxine 5'-phosphate + phosphate + 2 H2O + H(+). The protein operates within cofactor biosynthesis; pyridoxine 5'-phosphate biosynthesis; pyridoxine 5'-phosphate from D-erythrose 4-phosphate: step 5/5. Functionally, catalyzes the complicated ring closure reaction between the two acyclic compounds 1-deoxy-D-xylulose-5-phosphate (DXP) and 3-amino-2-oxopropyl phosphate (1-amino-acetone-3-phosphate or AAP) to form pyridoxine 5'-phosphate (PNP) and inorganic phosphate. The polypeptide is Pyridoxine 5'-phosphate synthase (Flavobacterium johnsoniae (strain ATCC 17061 / DSM 2064 / JCM 8514 / BCRC 14874 / CCUG 350202 / NBRC 14942 / NCIMB 11054 / UW101) (Cytophaga johnsonae)).